Reading from the N-terminus, the 778-residue chain is Endonuclease MutS2 (778 aa).

328 to 335 (GPNTGGKT) provides a ligand contact to ATP. Residues 702 to 777 (LDLRGKRYEE…GSGATIVTFK (76 aa)) enclose the Smr domain.

This sequence belongs to the DNA mismatch repair MutS family. MutS2 subfamily. Homodimer. Binds to stalled ribosomes, contacting rRNA.

In terms of biological role, endonuclease that is involved in the suppression of homologous recombination and thus may have a key role in the control of bacterial genetic diversity. Functionally, acts as a ribosome collision sensor, splitting the ribosome into its 2 subunits. Detects stalled/collided 70S ribosomes which it binds and splits by an ATP-hydrolysis driven conformational change. Acts upstream of the ribosome quality control system (RQC), a ribosome-associated complex that mediates the extraction of incompletely synthesized nascent chains from stalled ribosomes and their subsequent degradation. Probably generates substrates for RQC. The sequence is that of Endonuclease MutS2 from Streptococcus pneumoniae (strain CGSP14).